We begin with the raw amino-acid sequence, 470 residues long: Heparan-sulfate 6-O-sulfotransferase 3 (470 aa).

The Cytoplasmic portion of the chain corresponds to 1–4 (MDER). A helical; Signal-anchor for type II membrane protein membrane pass occupies residues 5–27 (FNKWLLTPVLTLLFVVIMYQYVS). Over 28–470 (PSCTSSCTNF…EDYNSQVVRW (443 aa)) the chain is Lumenal. Residues 36 to 121 (NFGEQLRSGE…EAPENGSLPR (86 aa)) form a disordered region. The segment covering 88–113 (PEDEDEDPGDPEEEEEEEEEEPDPEA) has biased composition (acidic residues). Asn116 and Asn127 each carry an N-linked (GlcNAc...) asparagine glycan. Position 151–159 (151–159 (HIQKTGGTT)) interacts with 3'-phosphoadenylyl sulfate. Residues 181–182 (KK), Arg198, Trp203, and His208 contribute to the substrate site. Catalysis depends on His208, which acts as the Proton acceptor. A glycan (N-linked (GlcNAc...) asparagine) is linked at Asn230. Residues Arg244 and Ser252 each contribute to the 3'-phosphoadenylyl sulfate site. Residues His256 and Trp263 each coordinate substrate. Asn323 and Asn328 each carry an N-linked (GlcNAc...) asparagine glycan. 376–378 (TQF) is a 3'-phosphoadenylyl sulfate binding site. An N-linked (GlcNAc...) asparagine glycan is attached at Asn379. 382–383 (RA) contributes to the 3'-phosphoadenylyl sulfate binding site. The disordered stretch occupies residues 421 to 453 (TKQLEHQRDRQKRREERRLQREHRAHRWPKEDR). Residues 422 to 439 (KQLEHQRDRQKRREERRL) are compositionally biased toward basic and acidic residues.

It belongs to the sulfotransferase 6 family. In terms of tissue distribution, ubiquitously expressed.

It localises to the membrane. The enzyme catalyses alpha-D-glucosaminyl-[heparan sulfate](n) + 3'-phosphoadenylyl sulfate = 6-sulfo-alpha-D-glucosaminyl-[heparan sulfate](n) + adenosine 3',5'-bisphosphate + H(+). Functionally, 6-O-sulfation enzyme which catalyzes the transfer of sulfate from 3'-phosphoadenosine 5'-phosphosulfate (PAPS) to position 6 of the N-sulfoglucosamine residue (GlcNS) of heparan sulfate. The polypeptide is Heparan-sulfate 6-O-sulfotransferase 3 (Hs6st3) (Mus musculus (Mouse)).